We begin with the raw amino-acid sequence, 543 residues long: Chaperonin GroEL 4 (543 aa).

ATP-binding positions include Thr-29–Pro-32, Asp-86–Thr-90, Gly-411, Asp-476–Ala-478, and Asp-492.

This sequence belongs to the chaperonin (HSP60) family. Forms a cylinder of 14 subunits composed of two heptameric rings stacked back-to-back. Interacts with the co-chaperonin GroES.

It localises to the cytoplasm. The catalysed reaction is ATP + H2O + a folded polypeptide = ADP + phosphate + an unfolded polypeptide.. Its function is as follows. Together with its co-chaperonin GroES, plays an essential role in assisting protein folding. The GroEL-GroES system forms a nano-cage that allows encapsulation of the non-native substrate proteins and provides a physical environment optimized to promote and accelerate protein folding. In Bradyrhizobium diazoefficiens (strain JCM 10833 / BCRC 13528 / IAM 13628 / NBRC 14792 / USDA 110), this protein is Chaperonin GroEL 4.